Reading from the N-terminus, the 456-residue chain is L-2-hydroxyglutarate dehydrogenase, mitochondrial (456 aa).

The N-terminal 20 residues, 1 to 20 (MLKTSFLLSKRNAVSLSRVL), are a transit peptide targeting the mitochondrion.

It belongs to the L2HGDH family. The cofactor is FAD.

The protein localises to the mitochondrion. The enzyme catalyses (S)-2-hydroxyglutarate + A = 2-oxoglutarate + AH2. The protein is L-2-hydroxyglutarate dehydrogenase, mitochondrial of Nematostella vectensis (Starlet sea anemone).